The chain runs to 135 residues: Immunity protein RhsIA (135 aa).

The disordered stretch occupies residues 58-77 (RKQGRQISLSCGEPPEYSPD).

Immunity component of a toxin-immunity protein module, which functions as a cellular contact-dependent growth inhibition (CDI) system. Specifically inhibits its cognate toxin RhsA. Cell contact is necessary for growth inhibition. The protein is Immunity protein RhsIA (rhsIA) of Dickeya dadantii (strain 3937) (Erwinia chrysanthemi (strain 3937)).